Reading from the N-terminus, the 137-residue chain is 14 kDa proline-rich protein DC2.15 (137 aa).

The first 25 residues, 1-25 (MGSKNSASVALFFTLNILFFALVSS), serve as a signal peptide directing secretion. Residues 30–53 (PDPYKPKPKPTPKPTPTPYPSAGK) form a disordered region. The segment covering 38 to 48 (KPTPKPTPTPY) has biased composition (pro residues). Residues 88–104 (LEGLVNLEAAVCLCTAI) form a helical membrane-spanning segment.

Its subcellular location is the membrane. In terms of biological role, may be connected with the initiation of embryogenesis or with the metabolic changes produced by the removal of auxins. The protein is 14 kDa proline-rich protein DC2.15 of Daucus carota (Wild carrot).